We begin with the raw amino-acid sequence, 71 residues long: Large ribosomal subunit protein bL31 (71 aa).

The Zn(2+) site is built by Cys-16, Cys-18, Cys-37, and Cys-40.

This sequence belongs to the bacterial ribosomal protein bL31 family. Type A subfamily. In terms of assembly, part of the 50S ribosomal subunit. The cofactor is Zn(2+).

Binds the 23S rRNA. The sequence is that of Large ribosomal subunit protein bL31 from Yersinia pseudotuberculosis serotype O:1b (strain IP 31758).